A 635-amino-acid polypeptide reads, in one-letter code: Chaperone protein DnaK (635 aa).

Position 198 is a phosphothreonine; by autocatalysis (threonine 198). A disordered region spans residues 598–635 (YAKAQPGEEQAGGAPHEGEAKDEKVVDADFEEVKEDKK). Positions 613–624 (HEGEAKDEKVVD) are enriched in basic and acidic residues. Residues 625–635 (ADFEEVKEDKK) are compositionally biased toward acidic residues.

It belongs to the heat shock protein 70 family.

Functionally, acts as a chaperone. In Geotalea uraniireducens (strain Rf4) (Geobacter uraniireducens), this protein is Chaperone protein DnaK.